The chain runs to 120 residues: Large ribosomal subunit protein bL19 (120 aa).

The protein belongs to the bacterial ribosomal protein bL19 family.

Functionally, this protein is located at the 30S-50S ribosomal subunit interface and may play a role in the structure and function of the aminoacyl-tRNA binding site. The sequence is that of Large ribosomal subunit protein bL19 from Geobacillus kaustophilus (strain HTA426).